A 175-amino-acid polypeptide reads, in one-letter code: Phosphatidylglycerol/phosphatidylinositol transfer protein (175 aa).

Positions 1–21 (MKFLSTAAALLVCLAPVSTTA) are cleaved as a signal peptide. Positions 22-37 (RSLDFFKSSQSPIQAQ) are excised as a propeptide.

Belongs to the NPC2 family. In terms of assembly, monomer.

It localises to the cytoplasm. It is found in the cytoplasmic vesicle. The protein localises to the golgi apparatus. In terms of biological role, catalyzes the intermembrane transfer of phosphatidylglycerol and phosphatidylinositol. In Aspergillus oryzae (strain ATCC 42149 / RIB 40) (Yellow koji mold), this protein is Phosphatidylglycerol/phosphatidylinositol transfer protein (pltp).